Here is an 89-residue protein sequence, read N- to C-terminus: UPF0297 protein OB2008 (89 aa).

The protein belongs to the UPF0297 family.

The sequence is that of UPF0297 protein OB2008 from Oceanobacillus iheyensis (strain DSM 14371 / CIP 107618 / JCM 11309 / KCTC 3954 / HTE831).